The following is a 311-amino-acid chain: Ribonuclease Z (311 aa).

Zn(2+) is bound by residues histidine 61, histidine 63, aspartate 65, histidine 66, histidine 139, aspartate 210, and histidine 268. The active-site Proton acceptor is the aspartate 65.

The protein belongs to the RNase Z family. As to quaternary structure, homodimer. Zn(2+) serves as cofactor.

It carries out the reaction Endonucleolytic cleavage of RNA, removing extra 3' nucleotides from tRNA precursor, generating 3' termini of tRNAs. A 3'-hydroxy group is left at the tRNA terminus and a 5'-phosphoryl group is left at the trailer molecule.. Zinc phosphodiesterase, which displays some tRNA 3'-processing endonuclease activity. Probably involved in tRNA maturation, by removing a 3'-trailer from precursor tRNA. The sequence is that of Ribonuclease Z from Haloarcula marismortui (strain ATCC 43049 / DSM 3752 / JCM 8966 / VKM B-1809) (Halobacterium marismortui).